The chain runs to 312 residues: Ribosomal RNA small subunit methyltransferase H (312 aa).

S-adenosyl-L-methionine-binding positions include 35-37 (GGH), D55, F79, D101, and Q108.

Belongs to the methyltransferase superfamily. RsmH family.

The protein resides in the cytoplasm. The catalysed reaction is cytidine(1402) in 16S rRNA + S-adenosyl-L-methionine = N(4)-methylcytidine(1402) in 16S rRNA + S-adenosyl-L-homocysteine + H(+). Specifically methylates the N4 position of cytidine in position 1402 (C1402) of 16S rRNA. The polypeptide is Ribosomal RNA small subunit methyltransferase H (Buchnera aphidicola subsp. Acyrthosiphon pisum (strain APS) (Acyrthosiphon pisum symbiotic bacterium)).